The sequence spans 197 residues: Wadjet protein JetB (197 aa).

Component of antiplasmid transformation system Wadjet type I, composed of JetA, JetB, JetC and JetD. Expression of Wadjet type I in B.subtilis (strain BEST7003) reduces the transformation efficiency of plasmid pHCMC05. This Bacillus cereus (strain Q1) protein is Wadjet protein JetB.